Reading from the N-terminus, the 542-residue chain is Pre-mRNA-splicing factor 38B (542 aa).

Residues 1–12 are compositionally biased toward polar residues; it reads MANNSPALTGNS. The segment at 1–24 is disordered; sequence MANNSPALTGNSQPQHQAAAAVVQ. An N-acetylalanine modification is found at Ala-2. Ser-5 is subject to Phosphoserine. The span at 13–24 shows a compositional bias: low complexity; it reads QPQHQAAAAVVQ. N6-acetyllysine is present on Lys-227. The disordered stretch occupies residues 232–542; the sequence is QIKTRPRKIK…KEHKNKDETV (311 aa). Basic and acidic residues predominate over residues 243–255; the sequence is DGKEGVEEIDRHI. Positions 256-284 are enriched in basic residues; sequence ERRRSRSPRRSLSPRRSPRRSRSRSHHRD. 4 positions are modified to phosphoserine: Ser-288, Ser-290, Ser-318, and Ser-320. Residues 291–327 show a composition bias toward basic and acidic residues; the sequence is FDRELEREKERQRLEREAKEREKERRRSRSLDRGLDR. The stretch at 292–323 forms a coiled coil; it reads DRELEREKERQRLEREAKEREKERRRSRSLDR. Residues 328–344 show a composition bias toward basic residues; it reads RRSRSRERHRSRSRSRD. Residues 345 to 418 show a composition bias toward basic and acidic residues; sequence RKGDRRDRDR…DRRHRDDKKE (74 aa). The segment covering 419–448 has biased composition (basic residues); sequence SKKKHSRSRSRERKHRSRSRSRNAGKRSRS. Ser-446 carries the phosphoserine modification. Residues 449-466 show a composition bias toward basic and acidic residues; it reads RSKDKASKHKNESKEKSN. Phosphoserine is present on residues Ser-471, Ser-473, and Ser-479. Composition is skewed to basic and acidic residues over residues 479–492 and 499–522; these read SVEKRKREHSPSRE and RSQDRSHKRDHDSKDQSDRQDHQR. Phosphoserine is present on residues Ser-523, Ser-525, and Ser-530. The span at 530-542 shows a compositional bias: basic and acidic residues; that stretch reads SQEKEHKNKDETV.

Belongs to the PRP38 family.

It localises to the nucleus. Its function is as follows. May be required for pre-mRNA splicing. The sequence is that of Pre-mRNA-splicing factor 38B (Prpf38b) from Rattus norvegicus (Rat).